The following is a 513-amino-acid chain: Sodium/potassium/calcium exchanger 5 (513 aa).

A signal peptide spans methionine 1 to cysteine 35. The Extracellular segment spans residues alanine 36–aspartate 78. A helical membrane pass occupies residues glycine 79–cysteine 99. The Cytoplasmic portion of the chain corresponds to aspartate 100–alanine 123. A helical membrane pass occupies residues threonine 124–valine 144. Residues threonine 145–aspartate 148 lie on the Extracellular side of the membrane. Residues isoleucine 149–cysteine 169 form a helical membrane-spanning segment. The Cytoplasmic segment spans residues glycine 170–cysteine 181. A helical transmembrane segment spans residues tryptophan 182 to isoleucine 202. Residues serine 203–valine 207 are Extracellular-facing. The chain crosses the membrane as a helical span at residues tyrosine 208–phenylalanine 228. At aspartate 229 to aspartate 315 the chain is on the cytoplasmic side. Residues leucine 316–proline 336 traverse the membrane as a helical segment. Topologically, residues aspartate 337–threonine 350 are extracellular. A helical membrane pass occupies residues phenylalanine 351–isoleucine 371. Topologically, residues valine 372–threonine 381 are cytoplasmic. A helical membrane pass occupies residues valine 382 to methionine 402. Topologically, residues valine 403–asparagine 420 are extracellular. A helical transmembrane segment spans residues valine 421 to glycine 441. Topologically, residues serine 442–glycine 450 are cytoplasmic. Residues leucine 451 to isoleucine 471 traverse the membrane as a helical segment. Residues asparagine 472–leucine 482 lie on the Extracellular side of the membrane. Residues valine 483–isoleucine 503 traverse the membrane as a helical segment. Over glycine 504–aspartate 513 the chain is Cytoplasmic.

This sequence belongs to the Ca(2+):cation antiporter (CaCA) (TC 2.A.19) family. SLC24A subfamily. Highly expressed in melanin-producing cells. Colocalizes with melanin biosynthesis marker dct.

It is found in the golgi apparatus. It localises to the trans-Golgi network membrane. The protein localises to the melanosome. The enzyme catalyses Ca(2+)(out) + K(+)(out) + 4 Na(+)(in) = Ca(2+)(in) + K(+)(in) + 4 Na(+)(out). Its function is as follows. Calcium, potassium:sodium antiporter that transports 1 Ca(2+) and 1 K(+) to the melanosome in exchange for 4 cytoplasmic Na(+). Involved in pigmentation, possibly by participating in ion transport in melanosomes. Predominant sodium-calcium exchanger in melanocytes. This is Sodium/potassium/calcium exchanger 5 (slc24a5) from Danio rerio (Zebrafish).